We begin with the raw amino-acid sequence, 346 residues long: DNA-directed RNA polymerase subunit alpha (346 aa).

Positions 1–243 (MTMNNPNLTM…EQLSIWVNFE (243 aa)) are alpha N-terminal domain (alpha-NTD). Residues 260-346 (LNENLFRSVE…ERWKAQQAQA (87 aa)) are alpha C-terminal domain (alpha-CTD).

Belongs to the RNA polymerase alpha chain family. As to quaternary structure, homodimer. The RNAP catalytic core consists of 2 alpha, 1 beta, 1 beta' and 1 omega subunit. When a sigma factor is associated with the core the holoenzyme is formed, which can initiate transcription.

It catalyses the reaction RNA(n) + a ribonucleoside 5'-triphosphate = RNA(n+1) + diphosphate. DNA-dependent RNA polymerase catalyzes the transcription of DNA into RNA using the four ribonucleoside triphosphates as substrates. This is DNA-directed RNA polymerase subunit alpha from Sorangium cellulosum (strain So ce56) (Polyangium cellulosum (strain So ce56)).